Consider the following 381-residue polypeptide: Glycerate kinase (381 aa).

It belongs to the glycerate kinase type-1 family.

It catalyses the reaction (R)-glycerate + ATP = (2R)-3-phosphoglycerate + ADP + H(+). The polypeptide is Glycerate kinase (glxK) (Bacillus cereus (strain ATCC 10987 / NRS 248)).